Reading from the N-terminus, the 176-residue chain is Inorganic pyrophosphatase (176 aa).

Substrate-binding residues include K30, R44, and Y56. Mg(2+)-binding residues include D66, D71, and D103. Y142 is a binding site for substrate.

The protein belongs to the PPase family. Homohexamer. Requires Mg(2+) as cofactor.

The protein localises to the cytoplasm. It catalyses the reaction diphosphate + H2O = 2 phosphate + H(+). In terms of biological role, catalyzes the hydrolysis of inorganic pyrophosphate (PPi) forming two phosphate ions. This is Inorganic pyrophosphatase from Salmonella typhi.